Consider the following 357-residue polypeptide: MKIVVLAGGRSTERNVSISSGYRITNALRQKGQQATFIDLFLGYDLEGKTVEQVFDDANTSKDLNISDAILTDEDINKLRPDGSTQLFGPNVMAICKAADIVFLALHGGDGENGKVQAVFDINGVKYTGSGPLASGITMNKVFSKEVMLYHGIQTSGFKEFKRDQGPKQTVPFDFPVVVKPTSGGSSVGTHIIHNQEELESGLEDVFRFDNSAIVEEFTPGREFSLGVVNGHAYSAIEIKVRSGWYDFKHKFQAGYTDFITPPKDLDEDVHQAMKDVAVQTMDVLGLQNYGRIDFFANEKGVWVIEANNLPGMTPLSLLPQEAEADGVDYGDLVMDIVNGKLKLYADGMTEAGLLTK.

In terms of domain architecture, ATP-grasp spans 145–339 (KEVMLYHGIQ…YGDLVMDIVN (195 aa)). 172-225 (PFDFPVVVKPTSGGSSVGTHIIHNQEELESGLEDVFRFDNSAIVEEFTPGREFS) is an ATP binding site. 3 residues coordinate Mg(2+): Asp-294, Glu-306, and Asn-308.

Belongs to the D-alanine--D-alanine ligase family. The cofactor is Mg(2+). It depends on Mn(2+) as a cofactor.

It is found in the cytoplasm. It catalyses the reaction 2 D-alanine + ATP = D-alanyl-D-alanine + ADP + phosphate + H(+). Its pathway is cell wall biogenesis; peptidoglycan biosynthesis. In terms of biological role, cell wall formation. This chain is D-alanine--D-alanine ligase, found in Lacticaseibacillus paracasei (strain ATCC 334 / BCRC 17002 / CCUG 31169 / CIP 107868 / KCTC 3260 / NRRL B-441) (Lactobacillus paracasei).